Reading from the N-terminus, the 277-residue chain is Nickel import ATP-binding protein NikE (277 aa).

The ABC transporter domain occupies 14 to 253; it reads YRTVSLVGRS…EHPASRALQR (240 aa). 46-53 lines the ATP pocket; it reads GRSGSGKS.

Belongs to the ABC transporter superfamily. Nickel importer (TC 3.A.1.5.3) family. The complex is composed of two ATP-binding proteins (NikD and NikE), two transmembrane proteins (NikB and NikC) and a solute-binding protein (NikA).

It localises to the cell inner membrane. It carries out the reaction Ni(2+)(out) + ATP + H2O = Ni(2+)(in) + ADP + phosphate + H(+). Part of the ABC transporter complex NikABCDE involved in nickel import. Responsible for energy coupling to the transport system. The protein is Nickel import ATP-binding protein NikE of Rhodospirillum rubrum (strain ATCC 11170 / ATH 1.1.1 / DSM 467 / LMG 4362 / NCIMB 8255 / S1).